The following is a 458-amino-acid chain: tRNA modification GTPase MnmE (458 aa).

The (6S)-5-formyl-5,6,7,8-tetrahydrofolate site is built by arginine 26, glutamate 88, and arginine 127. Residues 224 to 378 (GLSTAIIGRP…IEDRINQLFF (155 aa)) enclose the TrmE-type G domain. K(+) is bound at residue asparagine 234. GTP-binding positions include 234–239 (NVGKSS), 253–259 (TDIAGTT), and 278–281 (DTAG). Residue serine 238 participates in Mg(2+) binding. Residues threonine 253, isoleucine 255, and threonine 258 each contribute to the K(+) site. A Mg(2+)-binding site is contributed by threonine 259. Lysine 458 is a (6S)-5-formyl-5,6,7,8-tetrahydrofolate binding site.

It belongs to the TRAFAC class TrmE-Era-EngA-EngB-Septin-like GTPase superfamily. TrmE GTPase family. Homodimer. Heterotetramer of two MnmE and two MnmG subunits. The cofactor is K(+).

It localises to the cytoplasm. In terms of biological role, exhibits a very high intrinsic GTPase hydrolysis rate. Involved in the addition of a carboxymethylaminomethyl (cmnm) group at the wobble position (U34) of certain tRNAs, forming tRNA-cmnm(5)s(2)U34. The protein is tRNA modification GTPase MnmE of Streptococcus pyogenes serotype M5 (strain Manfredo).